The following is a 422-amino-acid chain: Vitellogenin-2 (422 aa).

The N-terminal stretch at 1-20 (MNPLTIFCLVAVLLSAATAH) is a signal peptide. Disordered regions lie at residues 161–191 (QGEQGDDSNQDTSSSEESSNRPNGQQPKPNG) and 399–422 (FGKSAPAQKQNSYHGIHQGAGRPN). A compositionally biased stretch (polar residues) spans 180–189 (NRPNGQQPKP).

Belongs to the AB hydrolase superfamily. Lipase family. Synthesized in the fat body and ovarian follicle cells and accumulate in the oocyte.

The protein resides in the secreted. In terms of biological role, vitellogenin is the major yolk protein of eggs where it is used as a food source during embryogenesis. In Ceratitis capitata (Mediterranean fruit fly), this protein is Vitellogenin-2 (VG2-delta).